A 290-amino-acid chain; its full sequence is Signal recognition particle receptor FtsY (290 aa).

GTP contacts are provided by residues 91–98 (GTNGSGKT), 173–177 (DTSGR), and 237–240 (TKVD).

The protein belongs to the GTP-binding SRP family. FtsY subfamily. Part of the signal recognition particle protein translocation system, which is composed of SRP and FtsY.

The protein localises to the cell inner membrane. It is found in the cytoplasm. It catalyses the reaction GTP + H2O = GDP + phosphate + H(+). Involved in targeting and insertion of nascent membrane proteins into the cytoplasmic membrane. Acts as a receptor for the complex formed by the signal recognition particle (SRP) and the ribosome-nascent chain (RNC). This chain is Signal recognition particle receptor FtsY, found in Chlamydia pneumoniae (Chlamydophila pneumoniae).